The following is a 407-amino-acid chain: Lymphocyte transmembrane adapter 1 (407 aa).

Residues 1 to 25 form a disordered region; sequence MYSTPAPPEVTRRNSEPSTRQGTLG. The Extracellular portion of the chain corresponds to 1–33; that stretch reads MYSTPAPPEVTRRNSEPSTRQGTLGSLQGEKGQ. Residues 16-25 show a composition bias toward polar residues; that stretch reads EPSTRQGTLG. The helical; Signal-anchor for type III membrane protein transmembrane segment at 34 to 54 threads the bilayer; the sequence is IIFPGFVVLLTIILVIIAACI. At 55–407 the chain is on the cytoplasmic side; that stretch reads LWSWKKQKKR…LATETSDEDA (353 aa). The interval 109-131 is disordered; it reads ESLLSRASDSPEPEAPQANGSLQ. A phosphotyrosine mark is found at Tyr185, Tyr260, Tyr286, and Tyr353. A disordered region spans residues 331–388; it reads SAQSEDSAMVHREEQSSEDSSDYETVLVAELEGRDWKQGPGTQHPSDEGTPGDLAGKL.

When phosphorylated, interacts with GRB2, PIK3R1 and GRAP2. In terms of processing, phosphorylated on tyrosines upon TCR or BCR activation; which leads to the recruitment of GRB2, PIK3R1 and GRAP2. Expressed in T-cells and B-cells.

The protein localises to the cell membrane. Negatively regulates TCR (T-cell antigen receptor)-mediated signaling in T-cells and BCR (B-cell antigen receptor)-mediated signaling in B-cells. This chain is Lymphocyte transmembrane adapter 1 (Lax1), found in Mus musculus (Mouse).